The chain runs to 281 residues: Nucleotide-binding protein Daro_0070 (281 aa).

8–15 (GLSGSGKS) contacts ATP. 57–60 (DARS) serves as a coordination point for GTP.

The protein belongs to the RapZ-like family.

Functionally, displays ATPase and GTPase activities. This Dechloromonas aromatica (strain RCB) protein is Nucleotide-binding protein Daro_0070.